Here is a 373-residue protein sequence, read N- to C-terminus: 3 beta-hydroxysteroid dehydrogenase/Delta 5--&gt;4-isomerase type 6 (373 aa).

Catalysis depends on tyrosine 155, which acts as the Proton acceptor. Lysine 159 contacts NAD(+). A helical transmembrane segment spans residues 288–308; sequence VPLLYWLAFMLETVSFLLSPI.

It belongs to the 3-beta-HSD family. Expressed in skin and testis.

Its subcellular location is the endoplasmic reticulum membrane. The protein localises to the mitochondrion membrane. The enzyme catalyses a 3beta-hydroxy-Delta(5)-steroid + NAD(+) = a 3-oxo-Delta(5)-steroid + NADH + H(+). The catalysed reaction is a 3-oxo-Delta(5)-steroid = a 3-oxo-Delta(4)-steroid. It functions in the pathway lipid metabolism; steroid biosynthesis. Functionally, 3-beta-HSD is a bifunctional enzyme, that catalyzes the oxidative conversion of Delta(5)-ene-3-beta-hydroxy steroid, and the oxidative conversion of ketosteroids. The 3-beta-HSD enzymatic system plays a crucial role in the biosynthesis of all classes of hormonal steroids. May be involved in local production of progesterone. The polypeptide is 3 beta-hydroxysteroid dehydrogenase/Delta 5--&gt;4-isomerase type 6 (Hsd3b6) (Mus musculus (Mouse)).